The chain runs to 192 residues: uncharacterized protein (192 aa).

One can recognise a Nudix hydrolase domain in the interval 29–160 (QRQAAVLVPI…PLDIHRRGND (132 aa)). Residues 67-89 (GAVDNTDATLIAAALREAQEEVA) carry the Nudix box motif. Residues E83 and E87 each contribute to the Mg(2+) site.

This sequence belongs to the Nudix hydrolase family. PCD1 subfamily. Mn(2+) is required as a cofactor. It depends on Mg(2+) as a cofactor.

Functionally, probably mediates the hydrolysis of some nucleoside diphosphate derivatives. This is an uncharacterized protein from Klebsiella pneumoniae (strain 342).